We begin with the raw amino-acid sequence, 266 residues long: Heat-inducible transcription repressor HrcA (266 aa).

It belongs to the HrcA family.

Negative regulator of class I heat shock genes (grpE-dnaK-dnaJ and groELS operons). Prevents heat-shock induction of these operons. The chain is Heat-inducible transcription repressor HrcA from Helicobacter pylori (strain J99 / ATCC 700824) (Campylobacter pylori J99).